The chain runs to 1236 residues: Calcium-activated potassium channel subunit alpha-1 (1236 aa).

Over residues 1–21 (MANGGGGGGGSSGGGGGGGGS) the composition is skewed to gly residues. Residues 1 to 61 (MANGGGGGGG…SSSSSSSSSV (61 aa)) form a disordered region. Over 1–86 (MANGGGGGGG…VPCDSRGQRM (86 aa)) the chain is Extracellular. Over residues 39-60 (SSSSSSSSSSSSSSSSSSSSSS) the composition is skewed to low complexity. A helical membrane pass occupies residues 87–107 (WWAFLASSMVTFFGGLFIILL). At 108 to 178 (WRTLKYLWTV…MISAQTLTGR (71 aa)) the chain is on the cytoplasmic side. Residues C118, C119, and C121 are each lipidated (S-palmitoyl cysteine). The chain crosses the membrane as a helical span at residues 179 to 199 (VLVVLVFALSIGALVIYFIDS). Residues 200–214 (SNPIESCQNFYKDFT) are Extracellular-facing. The helical transmembrane segment at 215-235 (LQIDMAFNVFFLLYFGLRFIA) threads the bilayer. Over 236–239 (ANDK) the chain is Cytoplasmic. The chain crosses the membrane as a helical span at residues 240–260 (LWFWLEVNSVVDFFTVPPVFV). Residues 261 to 264 (SVYL) are Extracellular-facing. Residues 265–285 (NRSWLGLRFLRALRLIQFSEI) traverse the membrane as a helical segment. The Cytoplasmic portion of the chain corresponds to 286-300 (LQFLNILKTSNSIKL). Residues 301–321 (VNLLSIFISTWLTAAGFIHLV) form a helical membrane-spanning segment. At 322-335 (ENSGDPWENFQNNQ) the chain is on the extracellular side. Residues 336–358 (ALTYWECVYLLMVTMSTVGYGDV) constitute an intramembrane region (pore-forming). A Selectivity for potassium motif is present at residues 352 to 355 (TVGY). The Extracellular portion of the chain corresponds to 359-367 (YAKTTLGRL). A helical membrane pass occupies residues 368-388 (FMVFFILGGLAMFASYVPEII). Over 389-1236 (ELIGNRKKYG…KQKYVQEERL (848 aa)) the chain is Cytoplasmic. Residues 407–549 (RKHIVVCGHI…WNWKEGDDAI (143 aa)) enclose the RCK N-terminal 1 domain. Residues E439, Q462, and E464 each coordinate Mg(2+). The segment at 556-576 (LGFIAQSCLAQGLSTMLANLF) is segment S7. A segment S8 region spans residues 613 to 633 (LSFPTVCELCFVKLKLLMIAI). The tract at residues 677–681 (CKACH) is heme-binding motif. A disordered region spans residues 757–787 (EDEQPSTLSPKKKQRNGGMRNSPNTSPKLMR). The residue at position 763 (T763) is a Phosphothreonine. 3 positions are modified to phosphoserine: S765, S778, and S782. Residues 837-857 (VLSGHVVVCIFGDVSSALIGL) are segment S9. An RCK N-terminal 2 domain is found at 839 to 983 (SGHVVVCIFG…MDRSSPDNSP (145 aa)). At T970 the chain carries Phosphothreonine. Phosphoserine occurs at positions 978 and 982. A Calcium bowl motif is present at residues 1003 to 1025 (TELVNDTNVQFLDQDDDDDPDTE). Residues Q1012, D1015, D1018, and D1020 each coordinate Ca(2+). The tract at residues 1032-1052 (FACGTAFAVSVLDSLMSATYF) is segment S10. The segment covering 1186–1211 (RASLSHSSHSSQSSSKKSSSVHSIPS) has biased composition (low complexity). Residues 1186-1236 (RASLSHSSHSSQSSSKKSSSVHSIPSTANRQNRPKSRESRDKQKYVQEERL) are disordered. The segment covering 1220–1236 (KSRESRDKQKYVQEERL) has biased composition (basic and acidic residues). S1221 and S1224 each carry phosphoserine.

Belongs to the potassium channel family. Calcium-activated (TC 1.A.1.3) subfamily. KCa1.1/KCNMA1 sub-subfamily. Homotetramer; which constitutes the calcium-activated potassium channel. Interacts with RAB11B. Interacts with beta subunits KCNMB1, KCNMB2, KCNMB3 and KCNMB4. Interacts with gamma subunits LRRC26, LRRC38, LRRC52 and LRRC55. Beta and gamma subunits are accessory, and modulate its activity. In terms of processing, phosphorylated. Phosphorylation by kinases such as PKA and/or PKG. In smooth muscles, phosphorylation affects its activity. Palmitoylation by ZDHHC22 and ZDHHC23 within the intracellular linker between the S0 and S1 transmembrane domains regulates localization to the plasma membrane. Depalmitoylated by LYPLA1 and LYPLAL1, leading to retard exit from the trans-Golgi network. Widely expressed. Except in myocytes, it is almost ubiquitously expressed.

Its subcellular location is the cell membrane. It catalyses the reaction K(+)(in) = K(+)(out). Ethanol and carbon monoxide-bound heme increase channel activation. Heme inhibits channel activation. Its function is as follows. Potassium channel activated by both membrane depolarization or increase in cytosolic Ca(2+) that mediates export of K(+). It is also activated by the concentration of cytosolic Mg(2+). Its activation dampens the excitatory events that elevate the cytosolic Ca(2+) concentration and/or depolarize the cell membrane. It therefore contributes to repolarization of the membrane potential. Plays a key role in controlling excitability in a number of systems, such as regulation of the contraction of smooth muscle, the tuning of hair cells in the cochlea, regulation of transmitter release, and innate immunity. In smooth muscles, its activation by high level of Ca(2+), caused by ryanodine receptors in the sarcoplasmic reticulum, regulates the membrane potential. In cochlea cells, its number and kinetic properties partly determine the characteristic frequency of each hair cell and thereby helps to establish a tonotopic map. Kinetics of KCNMA1 channels are determined by alternative splicing, phosphorylation status and its combination with modulating beta subunits. Highly sensitive to both iberiotoxin (IbTx) and charybdotoxin (CTX). Possibly induces sleep when activated by melatonin and through melatonin receptor MTNR1A-dependent dissociation of G-beta and G-gamma subunits, leading to increased sensitivity to Ca(2+) and reduced synaptic transmission. In terms of biological role, potassium channel activated by both membrane depolarization or increase in cytosolic Ca(2+) that mediates export of K(+). This Homo sapiens (Human) protein is Calcium-activated potassium channel subunit alpha-1.